The following is a 384-amino-acid chain: MVLRETDLIPIYQHLHQIPEIGLQEHETQAYLLSIIGKMPQEWLTIKTIPTLDTAILVKVSGLKHDYRIGYRTDIDALPVTENTGLPFASTHPGVMHACGHDIHMSVALGILSYFAENRPATDMVFMFQPAEENASGGQRLYESGALDGDWMPDEIFAFHDNPNLPTGAIGCRMGTLFAGTCEIHAHLSGKSGHAAYPHQANDMVVAGAALVSQLQTIVARNVDPIQSGVVTLGHFTAGTIGNVIAGEAQIDGTIRALTQEMNMHIQRRVRTITEGIALAYDCNIDLKLNQGGYYPVENNDAITADFIKYMQEDDDVNFIETEPAMTGEDFGYLIHQIPGTMFWLGVDSPYSLHSENMVPHTAAIMSGVNAMTSFLTHRNALHK.

Aspartate 74 is a catalytic residue. The active-site Proton acceptor is the glutamate 133.

This sequence belongs to the peptidase M20A family. N-acetyldiaminopimelate deacetylase subfamily.

It catalyses the reaction N-acetyl-(2S,6S)-2,6-diaminopimelate + H2O = (2S,6S)-2,6-diaminopimelate + acetate. The protein operates within amino-acid biosynthesis; L-lysine biosynthesis via DAP pathway; LL-2,6-diaminopimelate from (S)-tetrahydrodipicolinate (acetylase route): step 3/3. Its function is as follows. Catalyzes the conversion of N-acetyl-diaminopimelate to diaminopimelate and acetate. The sequence is that of N-acetyldiaminopimelate deacetylase from Lactiplantibacillus plantarum (strain ATCC BAA-793 / NCIMB 8826 / WCFS1) (Lactobacillus plantarum).